The chain runs to 215 residues: Cytochrome b6 (215 aa).

Residues 32–52 (IFYCLGGITLTCFLVQVATGF) form a helical membrane-spanning segment. Cys-35 contributes to the heme c binding site. Residues His-86 and His-100 each coordinate heme b. 3 helical membrane passes run 90–110 (ASMM…TGGF), 116–136 (LTWV…VTGY), and 186–206 (LHTF…FLMI). Heme b contacts are provided by His-187 and His-202.

This sequence belongs to the cytochrome b family. PetB subfamily. The 4 large subunits of the cytochrome b6-f complex are cytochrome b6, subunit IV (17 kDa polypeptide, PetD), cytochrome f and the Rieske protein, while the 4 small subunits are PetG, PetL, PetM and PetN. The complex functions as a dimer. It depends on heme b as a cofactor. The cofactor is heme c.

It is found in the plastid. It localises to the chloroplast thylakoid membrane. Functionally, component of the cytochrome b6-f complex, which mediates electron transfer between photosystem II (PSII) and photosystem I (PSI), cyclic electron flow around PSI, and state transitions. The sequence is that of Cytochrome b6 from Pinus thunbergii (Japanese black pine).